The primary structure comprises 704 residues: Preterpestacin I synthase tpcA (704 aa).

The tract at residues 1–329 (MEQLSYQSKL…CSACPRQNAW (329 aa)) is terpene cyclase. Residue Asp96 coordinates Mg(2+). Substrate contacts are provided by residues Asp96, Asn231, 235–239 (SWERE), and 325–326 (RQ). The DDXXD 1 signature appears at 96 to 100 (DDGGE). The NSE/DTE signature appears at 231–239 (NDYFSWERE). Residues 330 to 688 (KDMSSQSLNG…MLRLCLAKLS (359 aa)) are prenyltransferase. A disordered region spans residues 361-380 (KDSSFFGSQPSDDEPSLSEV). Residues Lys406, Arg409, and His438 each contribute to the isopentenyl diphosphate site. Residues Asp445 and Asp449 each contribute to the Mg(2+) site. The DDXXD 2 motif lies at 445 to 449 (DDLED). Arg454 contacts dimethylallyl diphosphate. An isopentenyl diphosphate-binding site is contributed by Arg455. Positions 532, 533, 568, 575, 583, and 593 each coordinate dimethylallyl diphosphate.

The protein in the N-terminal section; belongs to the terpene synthase family. In the C-terminal section; belongs to the FPP/GGPP synthase family. Hexamer. Mg(2+) is required as a cofactor.

It carries out the reaction isopentenyl diphosphate + (2E,6E)-farnesyl diphosphate = (2E,6E,10E)-geranylgeranyl diphosphate + diphosphate. The enzyme catalyses isopentenyl diphosphate + (2E,6E,10E)-geranylgeranyl diphosphate = (2E,6E,10E,14E)-geranylfarnesyl diphosphate + diphosphate. Its pathway is secondary metabolite biosynthesis; terpenoid biosynthesis. Bifunctional terpene synthase; part of the gene cluster that mediates the biosynthesis of terpestacin. The bifunctional terpene synthase tpcA converts isopentenyl diphosphate (IPP) and dimethylallyl diphosphate (DMAPP) into the sesterterpene preterpestacin I. The C-terminal prenyltransferase (PT) domain of tpcA catalyzes formation of GFPP, whereas the N-terminal terpene cyclase (TC) domain catalyzes the cyclization of GFPP into preterpestacin I. The cytochrome P450 monooxygenase tpcB then hydroxylates preterpestacin I to yield 24-hydroxypreterpstacin I (renamed as preterpestacin II) whereas the cytochrome P450 monooxygenase tpcC further hydroxylates preterpestacin II to yield 16,17-dihydroxypreterpestacin II (renamed as preterpestacin III). Finally, the FAD-dependent monooxygenase tpcD converts preterpestacin III into terpestacin. This is Preterpestacin I synthase tpcA from Cochliobolus heterostrophus (strain C5 / ATCC 48332 / race O) (Southern corn leaf blight fungus).